The chain runs to 250 residues: Probable 2' cyclic ADP-D-ribose synthase TcpB (250 aa).

A disordered region spans residues 1 to 46; the sequence is MSKEKQAQSKAHKAQQAISSAKSLSTQKSKMSELERATRDGAAIGK. The span at 14 to 23 shows a compositional bias: low complexity; it reads AQQAISSAKS. A compositionally biased stretch (basic and acidic residues) spans 30–39; the sequence is KMSELERATR. One can recognise a TIR domain in the interval 117 to 250; that stretch reads EEYDFFISHA…EIAKELHSLI (134 aa). Glu192 is a catalytic residue.

As to quaternary structure, homodimer. Interacts with host TIRAP. Interacts with host TLR4, abolishes the interaction of host TIRAP with TLR4.

It localises to the secreted. The protein localises to the host cell membrane. It carries out the reaction NAD(+) + H2O = ADP-D-ribose + nicotinamide + H(+). It catalyses the reaction NAD(+) = 2'cADPR + nicotinamide + H(+). Functionally, virulence factor that interferes with host Toll-like receptor 2 (TLR2) signaling, resulting in the reduction of dendritic cell maturation, inhibition of pro-inflammatory cytokine secretion and impaired NF-kappa-B activation in macrophages. Also acts on host TLR4. Binds host lipids. Has NAD(+) hydrolase (NADase) activity, catalyzes cleavage of NAD(+) into ADP-D-ribose (ADPR) and nicotinamide, also generates a cyclization variant of cyclic ADPR (cADPR), termed v-cADPR (probably 2'cADPR). The polypeptide is Probable 2' cyclic ADP-D-ribose synthase TcpB (Brucella abortus (strain 2308)).